The following is a 781-amino-acid chain: Molybdenum cofactor sulfurase (781 aa).

Position 246 is an N6-(pyridoxal phosphate)lysine (Lys246). Cys413 is an active-site residue. Residues 619–781 enclose the MOSC domain; the sequence is GDAVAQWLSE…MTCGDVVIVE (163 aa). Ser734 carries the post-translational modification Phosphoserine.

The protein belongs to the class-V pyridoxal-phosphate-dependent aminotransferase family. MOCOS subfamily. Pyridoxal 5'-phosphate serves as cofactor.

It catalyses the reaction Mo-molybdopterin + L-cysteine + AH2 = thio-Mo-molybdopterin + L-alanine + A + H2O. The protein operates within cofactor biosynthesis; molybdopterin biosynthesis. Sulfurates the molybdenum cofactor. Sulfation of molybdenum is essential for xanthine dehydrogenase (XDH) and aldehyde oxidase (ADO) enzymes in which molybdenum cofactor is liganded by 1 oxygen and 1 sulfur atom in active form. In Drosophila erecta (Fruit fly), this protein is Molybdenum cofactor sulfurase.